The primary structure comprises 1122 residues: Telomerase reverse transcriptase (1122 aa).

The segment at 1–239 (MTRAPRCPAV…TKRHLSLTST (239 aa)) is RNA-interacting domain 1. A GQ motif region spans residues 58–205 (MHWGSQPPPA…RPVGRNFTNL (148 aa)). Residues 137-141 (WMLLL) are required for regulating specificity for telomeric DNA and for processivity for primer elongation. The segment at 213–296 (SSSRQEAPKP…KDLSSKGKVS (84 aa)) is disordered. Positions 240-328 (SVPSAKKARC…PRQNAFQLRP (89 aa)) are linker. The segment covering 284-295 (TAEKDLSSKGKV) has biased composition (basic and acidic residues). The interval 306-528 (CKHKPSSTSL…VPAAEHRLRE (223 aa)) is required for oligomerization. The interval 329 to 540 (FIETRHFLYS…LATFLFWLMD (212 aa)) is RNA-interacting domain 2. A TFLY; involved in RNA binding motif is present at residues 332 to 337 (TRHFLY). Positions 381 to 511 (LCRTHRLSRR…MKVEDCHWLR (131 aa)) are QFP motif. A CP motif region spans residues 402–422 (LVNHAECQYVRLLRSHCRFRT). S447 carries the phosphoserine; by DYRK2 modification. Residues 595–928 (EVRHHQDTWL…CLFPWCGLLL (334 aa)) form the Reverse transcriptase domain. Y697 is subject to Phosphotyrosine; by SRC-type Tyr-kinases. Mg(2+) is bound by residues D702, D861, and D862. Residues 907–921 (LGGAAPYQLPAHCLF) are required for oligomerization. Residues 923–927 (WCGLL) form a primer grip sequence region. A CTE region spans residues 929–1122 (DTQTLEVFCD…LSTDFQTILD (194 aa)).

Belongs to the reverse transcriptase family. Telomerase subfamily. In terms of assembly, catalytic component of the telomerase holoenzyme complex composed of one molecule of TERT, one molecule of WRAP53/TCAB1, two molecules of H/ACA ribonucleoprotein complex subunits DKC1, NOP10, NHP2 and GAR1, and a telomerase RNA template component (TERC). The telomerase holoenzyme complex is associated with TEP1, SMG6/EST1A and POT1. The molecular chaperone HSP90/P23 complex is required for correct assembly and stabilization of the active telomerase. Interacts directly with HSP90A and PTGES3. Interacts with HSPA1A; the interaction occurs in the absence of TERC and dissociates once the complex has formed. Interacts with RAN; the interaction promotes nuclear export of TERT. Interacts with XPO1. Interacts with PTPN11; the interaction retains TERT in the nucleus. Interacts with NCL (via RRM1 and C-terminal RRM4/Arg/Gly-rich domains); the interaction is important for nucleolar localization of TERT. Interacts with SMARCA4 (via the bromodomain); the interaction regulates Wnt-mediated signaling. Interacts with MCRS1 (isoform MCRS2); the interaction inhibits in vitro telomerase activity. Interacts with PIF1; the interaction has no effect on the elongation activity of TERT. Interacts with PML; the interaction recruits TERT to PML bodies and inhibits telomerase activity. Interacts with GNL3L. Interacts with isoform 1 and isoform 2 of NVL. Interacts with DHX36. Interacts with ATF7. In terms of processing, phosphorylation at Tyr-697 under oxidative stress leads to translocation of TERT to the cytoplasm and reduces its antiapoptotic activity. Dephosphorylated by SHP2/PTPN11 leading to nuclear retention. Phosphorylation by the AKT pathway promotes nuclear location. Phosphorylation at the G2/M phase at Ser-447 by DYRK2 promotes ubiquitination by the EDVP complex and degradation. Ubiquitinated by the EDVP complex, a E3 ligase complex following phosphorylation at Ser-447 by DYRK2. Ubiquitinated leads to proteasomal degradation. High activity in intestine, liver and testis, moderate in lung, very low in muscle, heart and brain.

Its subcellular location is the nucleus. It localises to the nucleolus. The protein resides in the nucleoplasm. It is found in the chromosome. The protein localises to the telomere. Its subcellular location is the cytoplasm. It localises to the PML body. It catalyses the reaction DNA(n) + a 2'-deoxyribonucleoside 5'-triphosphate = DNA(n+1) + diphosphate. Its function is as follows. Telomerase is a ribonucleoprotein enzyme essential for the replication of chromosome termini in most eukaryotes. Active in progenitor and cancer cells. Inactive, or very low activity, in normal somatic cells. Catalytic component of the teleromerase holoenzyme complex whose main activity is the elongation of telomeres by acting as a reverse transcriptase that adds simple sequence repeats to chromosome ends by copying a template sequence within the RNA component of the enzyme. Catalyzes the RNA-dependent extension of 3'-chromosomal termini with the 6-nucleotide telomeric repeat unit, 5'-TTAGGG-3'. The catalytic cycle involves primer binding, primer extension and release of product once the template boundary has been reached or nascent product translocation followed by further extension. More active on substrates containing 2 or 3 telomeric repeats. Telomerase activity is regulated by a number of factors including telomerase complex-associated proteins, chaperones and polypeptide modifiers. Modulates Wnt signaling. Plays important roles in aging and antiapoptosis. The sequence is that of Telomerase reverse transcriptase (Tert) from Mus musculus (Mouse).